The following is a 334-amino-acid chain: Ficolin-1 (334 aa).

An N-terminal signal peptide occupies residues 1-17 (MQWPTLWAFSGLLCLCP). The segment at 47 to 117 (SCPGFPGPPG…SLGEKELGDT (71 aa)) is disordered. In terms of domain architecture, Collagen-like spans 50 to 88 (GFPGPPGPKGEPGSPAGRGERGFQGSPGKMGPAGSKGEP). Residues 117 to 334 (TLCQRGPRSC…KVAEMKIRAS (218 aa)) enclose the Fibrinogen C-terminal domain. 2 disulfides stabilise this stretch: cysteine 119-cysteine 147 and cysteine 126-cysteine 154. The segment at 123–162 (PRSCKDLLTRGIFLTGWYTIHLPDCRPLTVLCDMDVDGGG) is a domain; contributes to trimerization. Residues 163-251 (WTVFQRRVDG…LTLGQFLEGT (89 aa)) form a b domain; contributes to trimerization region. Residue asparagine 261 is glycosylated (N-linked (GlcNAc...) asparagine). 2 residues coordinate Ca(2+): aspartate 270 and aspartate 272. Cysteine 278 and cysteine 291 are oxidised to a cystine. 290-292 (NCH) serves as a coordination point for a carbohydrate. The p domain stretch occupies residues 325-334 (KVAEMKIRAS).

This sequence belongs to the ficolin lectin family. In terms of assembly, homotrimer. Interacts with elastin/ELN. Interacts (via Fibrinogen C-terminal domain) with FFAR2. Interacts with CRP; may regulate monocyte activation by FCN1. Highly expressed in liver and spleen.

It localises to the secreted. The protein localises to the cell membrane. In terms of biological role, extracellular lectin functioning as a pattern-recognition receptor in innate immunity. Binds the sugar moieties of pathogen-associated molecular patterns (PAMPs) displayed on microbes and activates the lectin pathway of the complement system. May also activate monocytes through a G protein-coupled receptor, FFAR2, inducing the secretion of interleukin-8/IL-8. Binds preferentially to 9-O-acetylated 2-6-linked sialic acid derivatives and to various glycans containing sialic acid engaged in a 2-3 linkage. The polypeptide is Ficolin-1 (Fcn1) (Mus musculus (Mouse)).